Consider the following 42-residue polypeptide: Crotamine Ile-19 (42 aa).

Cystine bridges form between Cys4–Cys36, Cys11–Cys30, and Cys18–Cys37.

Belongs to the crotamine-myotoxin family. Monomer. In terms of tissue distribution, expressed by the venom gland.

The protein resides in the secreted. In terms of biological role, cationic peptide that possesses multiple functions. It acts as a cell-penetrating peptide (CPP), and as a potent voltage-gated potassium channel (Kv) inhibitor, it induces severe muscle necrosis by a non-enzymatic mechanism and exhibits antimicrobial activities. It also elicits a short-lasting hyperextension of the hind limb. It does not cause observable tissue damage (whereas the whole venom causes severe myonecrosis accompanied by edema and hemorrhage). This chain is Crotamine Ile-19, found in Crotalus durissus ruruima (South American rattlesnake).